The primary structure comprises 435 residues: UPF0597 protein AHA_4077 (435 aa).

The protein belongs to the UPF0597 family.

The chain is UPF0597 protein AHA_4077 from Aeromonas hydrophila subsp. hydrophila (strain ATCC 7966 / DSM 30187 / BCRC 13018 / CCUG 14551 / JCM 1027 / KCTC 2358 / NCIMB 9240 / NCTC 8049).